A 367-amino-acid polypeptide reads, in one-letter code: 2-aminoethylphosphonate--pyruvate transaminase (367 aa).

Lysine 194 carries the N6-(pyridoxal phosphate)lysine modification.

Belongs to the class-V pyridoxal-phosphate-dependent aminotransferase family. PhnW subfamily. Homodimer. Pyridoxal 5'-phosphate is required as a cofactor.

The catalysed reaction is (2-aminoethyl)phosphonate + pyruvate = phosphonoacetaldehyde + L-alanine. In terms of biological role, involved in phosphonate degradation. The polypeptide is 2-aminoethylphosphonate--pyruvate transaminase (Salmonella paratyphi A (strain ATCC 9150 / SARB42)).